The following is a 177-amino-acid chain: Large ribosomal subunit protein uL6 (177 aa).

It belongs to the universal ribosomal protein uL6 family. As to quaternary structure, part of the 50S ribosomal subunit.

Functionally, this protein binds to the 23S rRNA, and is important in its secondary structure. It is located near the subunit interface in the base of the L7/L12 stalk, and near the tRNA binding site of the peptidyltransferase center. This Brucella melitensis biotype 1 (strain ATCC 23456 / CCUG 17765 / NCTC 10094 / 16M) protein is Large ribosomal subunit protein uL6.